Here is a 384-residue protein sequence, read N- to C-terminus: MAP kinase-activated protein kinase 3 (384 aa).

The residue at position 1 (methionine 1) is an N-acetylmethionine. The disordered stretch occupies residues 1-33 (MDGETAGEKGSLVPPPGALGGSALGGAPAPGVR). One can recognise a Protein kinase domain in the interval 46 to 306 (QLSKQVLGLG…IMQFMNHPWI (261 aa)). ATP-binding positions include 52-60 (LGLGVNGKV) and lysine 75. The active-site Proton acceptor is aspartate 168. Phosphothreonine; by MAPK14 is present on threonine 203. At serine 253 the chain carries Phosphoserine; by MAPK14. Serine 309 carries the post-translational modification Phosphoserine; by autocatalysis. Residues 309–345 (SMVVPQTPLYTARVLQEDKDHWDDVKEEMTSALATMR) are autoinhibitory helix. Threonine 315 carries the phosphothreonine; by MAPK14 modification. Residues 337–346 (MTSALATMRV) carry the Nuclear export signal (NES) motif. The segment at 347–371 (DYDQVKIKDLKTSNNRLLNKRRKKQ) is p38 MAPK-binding site. 2 short sequence motifs (bipartite nuclear localization signal) span residues 352–355 (KIKD) and 366–370 (KRRKK). Residues 359 to 384 (SNNRLLNKRRKKQAGSSSASQGCNNQ) form a disordered region. Over residues 372–384 (AGSSSASQGCNNQ) the composition is skewed to polar residues.

Belongs to the protein kinase superfamily. CAMK Ser/Thr protein kinase family. As to quaternary structure, heterodimer with p38-alpha/MAPK14. The heterodimer with p38-alpha/MAPK14 forms a stable complex: molecules are positioned 'face to face' so that the ATP-binding sites of both kinases are at the heterodimer interface. Interacts with TCF3 and with polycomb proteins, such as PCH2 and BMI1/PCGF4. Post-translationally, phosphorylated and activated by MAPK1/ERK2 and MAPK3/ERK1. Phosphorylated and activated by MAP kinase p38-alpha/MAPK14 at Thr-201, Ser-251 and Thr-313. Isoform 3 is degraded following phosphorylation at Thr-203. Ubiquitously expressed (at protein level). Isoform 3 is expressed in skeletal muscles and heart.

The protein localises to the nucleus. It localises to the cytoplasm. It carries out the reaction L-seryl-[protein] + ATP = O-phospho-L-seryl-[protein] + ADP + H(+). It catalyses the reaction L-threonyl-[protein] + ATP = O-phospho-L-threonyl-[protein] + ADP + H(+). Its activity is regulated as follows. Activated following phosphorylation by p38-alpha/MAPK14 following various stresses. Inhibited by ligand 5B (2'-[2-(1,3-benzodioxol-5-yl)pyrimidin-4-yl]-5',6'-dihydrospiro[piperidine-4,7'-pyrrolo[3,2-c]pyridin]- 4'(1'h)-one) and ligand P4O (2-[2-(2-fluorophenyl)pyridin-4-yl]-1,5,6,7-tetrahydro- 4h-pyrrolo[3,2-c]pyridin-4-one), 2 ATP-competitive inhibitors. Its function is as follows. Stress-activated serine/threonine-protein kinase involved in cytokines production, endocytosis, cell migration, chromatin remodeling and transcriptional regulation. Following stress, it is phosphorylated and activated by MAP kinase p38-alpha/MAPK14, leading to phosphorylation of substrates. Phosphorylates serine in the peptide sequence, Hyd-X-R-X(2)-S, where Hyd is a large hydrophobic residue. MAPKAPK2 and MAPKAPK3, share the same function and substrate specificity, but MAPKAPK3 kinase activity and level in protein expression are lower compared to MAPKAPK2. Phosphorylates HSP27/HSPB1, KRT18, KRT20, RCSD1, RPS6KA3, TAB3 and TTP/ZFP36. Mediates phosphorylation of HSP27/HSPB1 in response to stress, leading to dissociate HSP27/HSPB1 from large small heat-shock protein (sHsps) oligomers and impair their chaperone activities and ability to protect against oxidative stress effectively. Involved in inflammatory response by regulating tumor necrosis factor (TNF) and IL6 production post-transcriptionally: acts by phosphorylating AU-rich elements (AREs)-binding proteins, such as TTP/ZFP36, leading to regulate the stability and translation of TNF and IL6 mRNAs. Phosphorylation of TTP/ZFP36, a major post-transcriptional regulator of TNF, promotes its binding to 14-3-3 proteins and reduces its ARE mRNA affinity leading to inhibition of dependent degradation of ARE-containing transcript. Involved in toll-like receptor signaling pathway (TLR) in dendritic cells: required for acute TLR-induced macropinocytosis by phosphorylating and activating RPS6KA3. Also acts as a modulator of Polycomb-mediated repression. In Mus musculus (Mouse), this protein is MAP kinase-activated protein kinase 3 (Mapkapk3).